The primary structure comprises 813 residues: MSKLSFRARALDASKPLPVFRCEDLPDLHEYASINRAVPQMPTGMEKEEESEHHLQRAISAQQVYGEKRDNMVIPVPEAESNIAYYESIYPGEFRMPKQLIHIQPFSLDAEQPDYDLDSEDEVFVNKLKKKMDICPLQFEEMIDRLEKGSGQQPVSLQEAKLLLKEDDELIREVYEYWIKKRKTCRGSSLIPLVKQEKRDGSSTNDPYVAFRRRTEKMQTRKNRKNDEASYEKMLKLRRDLSRAVTILEMIKRREKSKRELLHLTLEIMEKRYNLGDYSGEIMSEVMAQRQPVKPTYAIPIIPITNSSQFKHQDATDSKEFKVNKQDKADLIRPKRKYEKKPKVLPPSAAAPQQQSPAALPGFSAKDLNQYDFPSSDEEPLSQVLSGSSEAEEENDPDGPFAFRRKAGCQYYAPHLDQTGNWPWTSPKDGGLGDVRYRYCLTTLTVPQRCLGFARRRVGRGGRVVLDRAHSDYDSMFHHLDLDMLSSPQPSPVNQFANTSEPNTSDRSSSKDLSQILVDIKSCRWRHFRPRTPSLPDSDSGELSSRKLHRSISRAGAAQPGAHTCSTSTQNRSSSGSAHCAFTAEQYQQHQQQLALMQQQQLAQTQQQQQANSSSSAAAQQGFVSKTLDSASAQFAASALMTSEQLLGFKVKDDVVLGLGVNGVLPASGVYKGLHLSSTTPTALVHTSPSTAGSTLLQPSNITQTSGSHSSLSHQVTAASSATTQVLFGNNIRLTVPSSVPTVNSVTPINARHIPRTLSAVPPSALKLAAAANCQVSKVPSSSSVDSVPRENHESEKPALNNIADNTVAMEVT.

Disordered stretches follow at residues Phe-310–Phe-403, Met-484–Leu-513, and Phe-528–Ser-577. Residues Lys-311 to Arg-333 are compositionally biased toward basic and acidic residues. Residue Lys-319 forms a Glycyl lysine isopeptide (Lys-Gly) (interchain with G-Cter in SUMO2) linkage. Residues Pro-346–Pro-361 are compositionally biased toward low complexity. Over residues Ser-486 to Leu-513 the composition is skewed to polar residues. The residue at position 538 (Ser-538) is a Phosphoserine. The segment covering Thr-564–Ser-577 has biased composition (low complexity). A Glycyl lysine isopeptide (Lys-Gly) (interchain with G-Cter in SUMO2) cross-link involves residue Lys-650. The interval Val-779–Thr-813 is disordered. A compositionally biased stretch (basic and acidic residues) spans Val-788–Lys-797.

This sequence belongs to the enhancer of polycomb family. In terms of assembly, component of the NuA4 histone acetyltransferase complex which contains the catalytic subunit KAT5/TIP60 and the subunits EP400, TRRAP/PAF400, BRD8/SMAP, EPC1, DMAP1/DNMAP1, RUVBL1/TIP49, RUVBL2, ING3, actin, ACTL6A/BAF53A, MORF4L1/MRG15, MORF4L2/MRGX, MRGBP, YEATS4/GAS41, VPS72/YL1 and MEAF6. KAT5/TIP60, EPC1, and ING3 together constitute a minimal HAT complex termed Piccolo NuA4. Component of a NuA4-related complex which contains EP400, TRRAP/PAF400, SRCAP, BRD8/SMAP, EPC1, DMAP1/DNMAP1, RUVBL1/TIP49, RUVBL2, actin, ACTL6A/BAF53A, VPS72 and YEATS4/GAS41. Interacts with TRIM27. Interacts with MBTD1; interaction is direct and promotes recruitment of MBTD1 into the NuA4 histone acetyltransferase complex. In terms of tissue distribution, expressed in adult brain, heart, kidney, liver, lung, skeletal muscle and testis. Expressed in male germ cells, present in round spermatids of steps 1 to 4.

Its subcellular location is the nucleus. The protein localises to the cytoplasm. Its function is as follows. Component of the NuA4 histone acetyltransferase (HAT) complex, a multiprotein complex involved in transcriptional activation of select genes principally by acetylation of nucleosomal histones H4 and H2A. The NuA4 complex plays a direct role in repair of DNA double-strand breaks (DSBs) by promoting homologous recombination (HR). The NuA4 complex is also required for spermatid development by promoting acetylation of histones: histone acetylation is required for histone replacement during the transition from round to elongating spermatids. In the NuA4 complex, EPC1 is required to recruit MBTD1 into the complex. In Mus musculus (Mouse), this protein is Enhancer of polycomb homolog 1.